A 183-amino-acid polypeptide reads, in one-letter code: MVPLAILVGTPKAWKKEVLPGSIPVLTALTQMSSGATAPALAGAATLLETITFLISVNGSLVKTKPTLPLTKGNNFSKSGKSDKKPLMALLTMVFLPIKTTALPLNSFLTSCICWEETLSTPTTNKDLYSSKYSLNLAKYSAFFSRMPPISNLLYVFIRLFAGCLKVFRLCILWLKLEKRIEN.

A helical transmembrane segment spans residues 153–175; that stretch reads LLYVFIRLFAGCLKVFRLCILWL.

It is found in the membrane. This is an uncharacterized protein from Saccharomyces cerevisiae (strain ATCC 204508 / S288c) (Baker's yeast).